A 374-amino-acid polypeptide reads, in one-letter code: Probable tuliposide A-converting enzyme b6, amyloplastic (374 aa).

The N-terminal 68 residues, 1-68 (MSVALFCGPP…TNSSLSPSPT (68 aa)), are a transit peptide targeting the amyloplast. Serine 226 (acyl-ester intermediate) is an active-site residue. Catalysis depends on charge relay system residues aspartate 316 and histidine 348.

It belongs to the AB hydrolase superfamily. As to quaternary structure, homodimer.

The protein localises to the plastid. It is found in the amyloplast. The catalysed reaction is 6-tuliposide A = tulipalin A + D-glucose. Its function is as follows. Lactone-forming carboxylesterases, specifically catalyzing intramolecular transesterification, but not hydrolysis. Involved in the biosynthesis of tulipalins, defensive chemicals that show antimicrobial activities against a broad range of strains of bacteria and fungi. Substrates are 6-tuliposide A &gt; 6-tuliposide B. This chain is Probable tuliposide A-converting enzyme b6, amyloplastic (TCEA-B6), found in Tulipa gesneriana (Garden tulip).